We begin with the raw amino-acid sequence, 471 residues long: Ammonium transporter Rh type B (471 aa).

Over methionine 1–leucine 13 the chain is Cytoplasmic. Residues glutamine 14–valine 33 traverse the membrane as a helical segment. The Extracellular segment spans residues arginine 34–tyrosine 60. An N-linked (GlcNAc...) asparagine glycan is attached at asparagine 48. Residues proline 61–leucine 81 form a helical membrane-spanning segment. Residues glutamine 82 to glycine 85 lie on the Cytoplasmic side of the membrane. The helical transmembrane segment at phenylalanine 86–valine 106 threads the bilayer. At glutamine 107–glutamate 123 the chain is on the extracellular side. Residues serine 124–glycine 144 form a helical membrane-spanning segment. The Cytoplasmic segment spans residues lysine 145–proline 148. A helical membrane pass occupies residues alanine 149–leucine 169. At leucine 170–aspartate 177 the chain is on the extracellular side. The helical transmembrane segment at alanine 178–tyrosine 200 threads the bilayer. The Cytoplasmic segment spans residues arginine 201–aspartate 217. The chain crosses the membrane as a helical span at residues leucine 218–leucine 238. Residues threonine 239–alanine 249 lie on the Extracellular side of the membrane. The chain crosses the membrane as a helical span at residues leucine 250–valine 270. Residues glycine 271 to histidine 280 lie on the Cytoplasmic side of the membrane. The chain crosses the membrane as a helical span at residues isoleucine 281–threonine 301. Position 302 (proline 302) is a topological domain, extracellular. Residues phenylalanine 303–phenylalanine 323 form a helical membrane-spanning segment. Residues threonine 324 to glycine 344 lie on the Cytoplasmic side of the membrane. A helical transmembrane segment spans residues methionine 345–alanine 365. The Extracellular segment spans residues tyrosine 366 to glutamine 391. A helical membrane pass occupies residues leucine 392–leucine 412. At leucine 413–alanine 471 the chain is on the cytoplasmic side. The segment at lysine 414–proline 422 is interaction with ANK3. Residues tyrosine 427–glutamine 430 carry the Basolateral sorting signal motif. The tract at residues glycine 437–alanine 471 is disordered. Over residues glycine 452–alanine 471 the composition is skewed to basic and acidic residues.

This sequence belongs to the ammonium transporter (TC 2.A.49) family. Rh subfamily. In terms of assembly, interacts (via C-terminus) with ANK2 and ANK3; required for targeting to the basolateral membrane. N-glycosylated.

The protein resides in the cell membrane. Its subcellular location is the basolateral cell membrane. The catalysed reaction is NH4(+)(in) = NH4(+)(out). It catalyses the reaction methylamine(out) = methylamine(in). The enzyme catalyses CO2(out) = CO2(in). Functionally, ammonium transporter involved in the maintenance of acid-base homeostasis. Transports ammonium and its related derivative methylammonium across the basolateral plasma membrane of epithelial cells likely contributing to renal transepithelial ammonia transport and ammonia metabolism. May transport either NH4(+) or NH3 ammonia species predominantly mediating an electrogenic NH4(+) transport. May act as a CO2 channel providing for renal acid secretion. This is Ammonium transporter Rh type B (RHBG) from Pongo pygmaeus (Bornean orangutan).